A 293-amino-acid polypeptide reads, in one-letter code: tRNA pseudouridine synthase B (293 aa).

Residue Asp-38 is the Nucleophile of the active site.

It belongs to the pseudouridine synthase TruB family. Type 1 subfamily.

It catalyses the reaction uridine(55) in tRNA = pseudouridine(55) in tRNA. Functionally, responsible for synthesis of pseudouridine from uracil-55 in the psi GC loop of transfer RNAs. In Nostoc sp. (strain PCC 7120 / SAG 25.82 / UTEX 2576), this protein is tRNA pseudouridine synthase B.